The sequence spans 180 residues: Secreted RxLR effector protein 5 (180 aa).

An N-terminal signal peptide occupies residues 1 to 24 (MRFYYTLLATAAALLVHSDALSAA). Positions 44–60 (RFLRRHTDSETTDNEER) match the RxLR-dEER motif.

It belongs to the RxLR effector family.

It is found in the secreted. The protein resides in the host cell. In terms of biological role, secreted effector that partially suppresses elicitor-induced cell death in host and enhances virulence of P.parasitica. In Phytophthora nicotianae (Potato buckeye rot agent), this protein is Secreted RxLR effector protein 5.